The chain runs to 1265 residues: Dynactin subunit 1 (1265 aa).

The CAP-Gly domain maps to 27–69 (GMTSFAVGKWVGVVLDEPKGKNSGSIKGQQYFQCDENCGMFVR). The disordered stretch occupies residues 81–179 (GSRRSIEDVS…GNGAASHASS (99 aa)). Ser-85, Ser-110, Ser-114, Ser-117, and Ser-121 each carry phosphoserine. 2 stretches are compositionally biased toward low complexity: residues 103–138 (RLSS…SSSS) and 161–177 (AEGA…ASHA). Ser-183 carries the phosphoserine modification. Coiled coils occupy residues 213 to 570 (NSGA…ESLQ), 812 to 836 (LIQF…RLPS), and 967 to 1084 (QRAQ…NSTT). Positions 1082–1106 (STTGKVQPGSESHSPHNISLSGNTS) are disordered. Residue Ser-1117 is modified to Phosphoserine. Residues 1128–1160 (EEVELLKNAFNQERNQRLRLQAQDMRAKLSQFE) adopt a coiled-coil conformation.

This sequence belongs to the dynactin 150 kDa subunit family. Monomer and homodimer. Subunit of dynactin, a multiprotein complex part of a tripartite complex with dynein and a adapter, such as BICDL1, BICD2 or HOOK3. The dynactin complex is built around ACTR1A/ACTB filament and consists of an actin-related filament composed of a shoulder domain, a pointed end and a barbed end. Its length is defined by its flexible shoulder domain. The soulder is composed of 2 DCTN1 subunits, 4 DCTN2 and 2 DCTN3. DCTN1/p150(glued) binds directly to microtubules and to cytoplasmic dynein.

The protein localises to the cytoplasm. It is found in the cytoskeleton. Its function is as follows. Part of the dynactin complex that activates the molecular motor dynein for ultra-processive transport along microtubules. Plays a key role in dynein-mediated retrograde transport of vesicles and organelles along microtubules by recruiting and tethering dynein to microtubules. Binds to both dynein and microtubules providing a link between specific cargos, microtubules and dynein. Essential for targeting dynein to microtubule plus ends, recruiting dynein to membranous cargos and enhancing dynein processivity (the ability to move along a microtubule for a long distance without falling off the track). Can also act as a brake to slow the dynein motor during motility along the microtubule. Can regulate microtubule stability by promoting microtubule formation, nucleation and polymerization and by inhibiting microtubule catastrophe in neurons. Inhibits microtubule catastrophe by binding both to microtubules and to tubulin, leading to enhanced microtubule stability along the axon. Plays a role in metaphase spindle orientation. Plays a role in centriole cohesion and subdistal appendage organization and function. Its recruitment to the centriole in a KIF3A-dependent manner is essential for the maintenance of centriole cohesion and the formation of subdistal appendage. Also required for microtubule anchoring at the mother centriole. Plays a role in primary cilia formation. This Drosophila melanogaster (Fruit fly) protein is Dynactin subunit 1.